The primary structure comprises 571 residues: Ubiquitin-like-specific protease 1C (571 aa).

The tract at residues serine 221–valine 260 is disordered. Basic and acidic residues predominate over residues glutamate 222–asparagine 233. Catalysis depends on residues histidine 426, aspartate 449, and cysteine 512.

This sequence belongs to the peptidase C48 family.

Its subcellular location is the nucleus. The protein resides in the nucleoplasm. Protease that catalyzes two essential functions in the SUMO pathway: processing of full-length SUMOs to their mature forms and deconjugation of SUMO from targeted proteins. Cleaves precursors of SUM1 and SUM2, but not of SUM3 or SUM5. Able to release SUM1 and SUM2 from conjugates, but unable to cleave SUM3. Protease activity mainly directed at deconjugating SUM1 and SUM2 from their target proteins. Regulates salt stress responses and flowering time. Redundant with ULP1D. This is Ubiquitin-like-specific protease 1C (ULP1C) from Arabidopsis thaliana (Mouse-ear cress).